A 394-amino-acid chain; its full sequence is Protein STRICTOSIDINE SYNTHASE-LIKE 1 (394 aa).

The N-terminal stretch at 1–21 (MESLLLIAYAFLYLFLLSHEA) is a signal peptide. A compositionally biased stretch (basic and acidic residues) spans 61-73 (GLEKRPNHSEDNP). A disordered region spans residues 61 to 92 (GLEKRPNHSEDNPPSRGWTGEPGLDPRGEGPY). 3 N-linked (GlcNAc...) asparagine glycosylation sites follow: Asn-67, Asn-122, and Asn-196.

The protein belongs to the strictosidine synthase family.

It localises to the vacuole. The protein is Protein STRICTOSIDINE SYNTHASE-LIKE 1 of Arabidopsis thaliana (Mouse-ear cress).